Reading from the N-terminus, the 896-residue chain is Protein translocase subunit SecA (896 aa).

Residues Gln87, 105-109, and Asp507 contribute to the ATP site; that span reads GEGKT. Residues 853-879 are disordered; it reads ESLSENDEASETQTFRRQEKKIGRNDP. Positions 866–876 are enriched in basic and acidic residues; it reads TFRRQEKKIGR. The Zn(2+) site is built by Cys880, Cys882, Cys891, and His892.

It belongs to the SecA family. In terms of assembly, monomer and homodimer. Part of the essential Sec protein translocation apparatus which comprises SecA, SecYEG and auxiliary proteins SecDF-YajC and YidC. Zn(2+) serves as cofactor.

It is found in the cell inner membrane. The protein localises to the cytoplasm. The catalysed reaction is ATP + H2O + cellular proteinSide 1 = ADP + phosphate + cellular proteinSide 2.. Part of the Sec protein translocase complex. Interacts with the SecYEG preprotein conducting channel. Has a central role in coupling the hydrolysis of ATP to the transfer of proteins into and across the cell membrane, serving both as a receptor for the preprotein-SecB complex and as an ATP-driven molecular motor driving the stepwise translocation of polypeptide chains across the membrane. In Legionella pneumophila (strain Corby), this protein is Protein translocase subunit SecA.